The following is an 82-amino-acid chain: Small ribosomal subunit protein bS18 (82 aa).

A disordered region spans residues 1 to 21 (MKRNNSKKVRVEPTRRPKKNP).

The protein belongs to the bacterial ribosomal protein bS18 family. Part of the 30S ribosomal subunit. Forms a tight heterodimer with protein bS6.

Its function is as follows. Binds as a heterodimer with protein bS6 to the central domain of the 16S rRNA, where it helps stabilize the platform of the 30S subunit. The protein is Small ribosomal subunit protein bS18 of Corynebacterium kroppenstedtii (strain DSM 44385 / JCM 11950 / CIP 105744 / CCUG 35717).